A 154-amino-acid polypeptide reads, in one-letter code: Putative NADPH-dependent 7-cyano-7-deazaguanine reductase (154 aa).

Aspartate 52 functions as the Proton donor in the catalytic mechanism. Substrate contacts are provided by residues 67-69 (VES) and 86-87 (HE).

Belongs to the GTP cyclohydrolase I family. QueF type 1 subfamily.

The protein resides in the cytoplasm. The enzyme catalyses 7-aminomethyl-7-carbaguanine + 2 NADP(+) = 7-cyano-7-deazaguanine + 2 NADPH + 3 H(+). It functions in the pathway tRNA modification; tRNA-queuosine biosynthesis. Catalyzes the NADPH-dependent reduction of 7-cyano-7-deazaguanine (preQ0) to 7-aminomethyl-7-deazaguanine (preQ1). The protein is Putative NADPH-dependent 7-cyano-7-deazaguanine reductase of Streptococcus pneumoniae serotype 4 (strain ATCC BAA-334 / TIGR4).